A 113-amino-acid polypeptide reads, in one-letter code: Cell division topological specificity factor (113 aa).

The protein belongs to the MinE family.

In terms of biological role, prevents the cell division inhibition by proteins MinC and MinD at internal division sites while permitting inhibition at polar sites. This ensures cell division at the proper site by restricting the formation of a division septum at the midpoint of the long axis of the cell. This is Cell division topological specificity factor from Methylobacterium radiotolerans (strain ATCC 27329 / DSM 1819 / JCM 2831 / NBRC 15690 / NCIMB 10815 / 0-1).